Reading from the N-terminus, the 296-residue chain is ATP-dependent ribose-1-phosphate kinase (296 aa).

Asp242 (proton acceptor) is an active-site residue.

This sequence belongs to the carbohydrate kinase PfkB family. The cofactor is Mg(2+).

It carries out the reaction alpha-D-ribose 1-phosphate + ATP = alpha-D-ribose 1,5-bisphosphate + ADP + H(+). With respect to regulation, requires salt for kinase activity. 2.0 M is the optimal KCl concentration. Its function is as follows. Kinase involved in the non-carboxylating pentose bisphosphate pathway, a nucleoside degradation pathway present in some halophilic archaea. Catalyzes the ATP-dependent phosphorylation of ribose 1-phosphate (R1P) to ribose 1,5-bisphosphate (R15P). Shows weak activity towards various other phosphate acceptors, such as xylulose, 2'-deoxyguanosine and D-ribulose. ATP is the most preferred phosphate donor, followed by CTP and GTP. The chain is ATP-dependent ribose-1-phosphate kinase from Halopiger xanaduensis (strain DSM 18323 / JCM 14033 / SH-6).